Reading from the N-terminus, the 132-residue chain is Cytochrome B5 isoform C (132 aa).

One can recognise a Cytochrome b5 heme-binding domain in the interval 2 to 78 (ANLISFHDVA…MKKYCIGDVD (77 aa)). The heme site is built by His-37 and His-61. A helical transmembrane segment spans residues 110–129 (LLIYLIPLLILGVAFALRFY).

Belongs to the cytochrome b5 family. As to quaternary structure, interacts with CER1, BI-1, FAH1 and FAH2.

The protein localises to the endoplasmic reticulum membrane. Its function is as follows. Membrane bound hemoprotein which function as an electron carrier for several membrane bound oxygenases, including fatty acid desaturases. This Arabidopsis thaliana (Mouse-ear cress) protein is Cytochrome B5 isoform C.